A 347-amino-acid chain; its full sequence is Heat-inducible transcription repressor HrcA (347 aa).

It belongs to the HrcA family.

In terms of biological role, negative regulator of class I heat shock genes (grpE-dnaK-dnaJ and groELS operons). Prevents heat-shock induction of these operons. This Sorangium cellulosum (strain So ce56) (Polyangium cellulosum (strain So ce56)) protein is Heat-inducible transcription repressor HrcA.